Here is a 477-residue protein sequence, read N- to C-terminus: FAD-dependent monooxygenase paxM (477 aa).

Residues 4 to 24 traverse the membrane as a helical segment; the sequence is AEFQVIIVGGSIGGLTLAHCL. 3 residues coordinate FAD: Glu35, Gly49, and Arg108. The active site involves Arg195. Residues Asp308 and Ala321 each contribute to the FAD site. The chain crosses the membrane as a helical span at residues 446-466; it reads LMIYLFGLTIVYTSLTMMFDL.

Belongs to the paxM FAD-dependent monooxygenase family. FAD serves as cofactor.

Its subcellular location is the membrane. It functions in the pathway secondary metabolite biosynthesis. Its function is as follows. FAD-dependent monooxygenase; part of the gene cluster that mediates the biosynthesis of paxilline, a mycotoxin that acts as an inhibitor of mammalian maxi-K channels. PaxG, the geranylgeranyl diphosphate (GGPP) synthase is proposed to catalyze the first step in paxilline biosynthesis. Condensation of indole-3-glycerol phosphate with GGPP by paxC then forms 3-geranylgeranylindole (3-GGI), followed by epoxidation and cyclization of this intermediate (by paxM and paxB) to form paspaline. Paspaline is subsequently converted to 13-desoxypaxilline by paxP, the latter being then converted to paxilline by paxQ. Finally paxilline can be mono- and di-prenylated by paxD. This is FAD-dependent monooxygenase paxM from Penicillium paxilli.